We begin with the raw amino-acid sequence, 385 residues long: Homoserine O-succinyltransferase (385 aa).

The AB hydrolase-1 domain occupies 51 to 359; that stretch reads NAILICHALS…EATEGHDAFL (309 aa). Ser157 serves as the catalytic Nucleophile. Arg227 lines the substrate pocket. Active-site residues include Asp322 and His355. Asp356 is a binding site for substrate.

It belongs to the AB hydrolase superfamily. MetX family. As to quaternary structure, homodimer.

It is found in the cytoplasm. The catalysed reaction is L-homoserine + succinyl-CoA = O-succinyl-L-homoserine + CoA. It functions in the pathway amino-acid biosynthesis; L-methionine biosynthesis via de novo pathway; O-succinyl-L-homoserine from L-homoserine: step 1/1. Functionally, transfers a succinyl group from succinyl-CoA to L-homoserine, forming succinyl-L-homoserine. This chain is Homoserine O-succinyltransferase, found in Marinomonas sp. (strain MWYL1).